A 311-amino-acid chain; its full sequence is Malate dehydrogenase (311 aa).

NAD(+)-binding positions include 7 to 13 (GAAGGIG) and aspartate 34. Residues arginine 81 and arginine 87 each coordinate substrate. NAD(+) is bound by residues asparagine 94 and 117 to 119 (ITN). Substrate contacts are provided by asparagine 119 and arginine 153. Catalysis depends on histidine 177, which acts as the Proton acceptor. Methionine 227 contributes to the NAD(+) binding site.

This sequence belongs to the LDH/MDH superfamily. MDH type 1 family. Homodimer.

The enzyme catalyses (S)-malate + NAD(+) = oxaloacetate + NADH + H(+). Its function is as follows. Catalyzes the reversible oxidation of malate to oxaloacetate. The sequence is that of Malate dehydrogenase from Aeromonas salmonicida (strain A449).